The following is a 198-amino-acid chain: Crinkler effector protein BLC01 (198 aa).

Residues 1 to 15 (MMVKLICAIVDIAGA) form the signal peptide. The tract at residues 16–55 (AFPIDIDTNELVGDFKKVIKAENSRTIACDANDLRLFLAK) is LQLFLAK domain. A DWL domain region spans residues 56–113 (TDGRWLTEFEVQNGVADISVFEELDVVGAPLNMIGLSEETVSSVAITKELVKAKKTPL). The HVLVXXP motif signature appears at 114–119 (HVLVVP).

It belongs to the Crinkler effector family.

It localises to the secreted. The protein resides in the host cell. Functionally, secreted effector that elicits necrosis in host plants, a characteristic of plant innate immunity. The sequence is that of Crinkler effector protein BLC01 from Bremia lactucae (Lettuce downy mildew).